The following is a 183-amino-acid chain: Translation initiation factor IF-3 (183 aa).

This sequence belongs to the IF-3 family. In terms of assembly, monomer.

The protein resides in the cytoplasm. IF-3 binds to the 30S ribosomal subunit and shifts the equilibrium between 70S ribosomes and their 50S and 30S subunits in favor of the free subunits, thus enhancing the availability of 30S subunits on which protein synthesis initiation begins. This Azobacteroides pseudotrichonymphae genomovar. CFP2 protein is Translation initiation factor IF-3.